A 283-amino-acid chain; its full sequence is (+)-borneol dehydrogenase 2 (283 aa).

NAD(+) is bound by residues 27–33, D51, 76–77, and 103–105; these read GGSSGIG, DV, and NAG. S157 acts as the Proton donor in catalysis. Y170, K174, and T205 together coordinate NAD(+). Y170 serves as the catalytic Proton acceptor. K174 acts as the Proton donor/acceptor in catalysis.

The protein belongs to the short-chain dehydrogenases/reductases (SDR) family.

It catalyses the reaction (1R,2S,4R)-borneol + NAD(+) = (1R,4R)-camphor + NADH + H(+). Its function is as follows. Involved in the biosynthesis of monoterpene natural products related to camphor. Catalayzes the oxidation of (+)-borneol to (+)-camphor. Shows absolute selectivity towards (+)-borneol. Catalyzes the oxidation of (+)-isoborneol to (-)-camphor. Shows absolute selectivity towards (+)-isoborneol. This chain is (+)-borneol dehydrogenase 2, found in Salvia officinalis (Sage).